The primary structure comprises 480 residues: Docking protein 1 (480 aa).

The residue at position 1 (Met-1) is an N-acetylmethionine. The region spanning 3–119 is the PH domain; it reads GALMEGPLFL…WVQILCRTAF (117 aa). Residue Ser-48 is modified to Phosphoserine. The IRS-type PTB domain maps to 151–259; it reads EGSQFWVTSQ…QQQKAQGKVG (109 aa). Residues 253–262 are compositionally biased toward low complexity; it reads KAQGKVGQGQ. The tract at residues 253-328 is disordered; it reads KAQGKVGQGQ…GSTPAGAGEG (76 aa). Residues 265–276 show a composition bias toward basic and acidic residues; sequence TRTDSHDGETEG. Residues Ser-269 and Ser-290 each carry the phosphoserine modification. Phosphotyrosine is present on residues Tyr-295, Tyr-336, and Tyr-340. Tyr-361 is modified (phosphotyrosine; by INSR). A Phosphotyrosine modification is found at Tyr-376. Tyr-397 is modified (phosphotyrosine; by INSR). Positions 398-480 are disordered; the sequence is ELPYNPATDD…RVGVKSEGST (83 aa). Tyr-408 is subject to Phosphotyrosine. Residues 410-423 show a composition bias toward pro residues; that stretch reads VPPPRSSKPTPAPK. Ser-415 is subject to Phosphoserine. The span at 432-445 shows a compositional bias: low complexity; that stretch reads SGTTAGSGSKGSDT. The span at 446 to 455 shows a compositional bias: polar residues; that stretch reads ALYSQVQKSG. The residue at position 448 (Tyr-448) is a Phosphotyrosine.

It belongs to the DOK family. Type A subfamily. In terms of assembly, interacts with RasGAP and INPP5D/SHIP1. Interacts directly with phosphorylated ITGB3. Interacts with SRMS (via the SH2 and SH3 domains). Constitutively tyrosine-phosphorylated. Phosphorylated by TEC. Phosphorylated by LYN. Phosphorylated on tyrosine residues by the insulin receptor kinase. Results in the negative regulation of the insulin signaling pathway. Phosphorylated on tyrosine residues by SRMS.

The protein resides in the cytoplasm. It localises to the nucleus. Its function is as follows. DOK proteins are enzymatically inert adaptor or scaffolding proteins. They provide a docking platform for the assembly of multimolecular signaling complexes. DOK1 appears to be a negative regulator of the insulin signaling pathway. Modulates integrin activation by competing with talin for the same binding site on ITGB3. The sequence is that of Docking protein 1 (Dok1) from Rattus norvegicus (Rat).